The primary structure comprises 345 residues: MREGGVMKKRLLALIVAFAVLTAGCLGSESKEVTLIVFHAGSLSVPFQEVEKEFSEYAERNLGIKVSFQDEASGSVMAVRKVTDLGRKADVIGVADYTLIPQLLIPNYTDFYVLFATNEIVIAFTDKSRYVEEMKSNPDKWYEILAREDVRFGFSDPNQDPCGYRSLMVIKLADLYYGKEIFKELIEENTNIYSNGTQIYAPKEITVNPGKIVIRPKETDLLGLVESGSIDYIFIYKSVAKQHNLSYITLPSEINLGDFSKEKFYGQISITLGSTGKTIKAKPIVYGVTVLKDAPNREVAIEFLRYLLSENGKRIFEKNHQDFLEPPIAFGNVPEELKPLVSIEK.

Positions 1–27 are cleaved as a signal peptide; it reads MREGGVMKKRLLALIVAFAVLTAGCLG. Molybdate contacts are provided by residues 41-42, serine 75, 160-162, glutamate 218, and tyrosine 236; these read GS and DPC. Residues 41–42, serine 75, 160–162, glutamate 218, and tyrosine 236 each bind tungstate; these read GS and DPC.

The protein belongs to the bacterial solute-binding protein 1 family. WtpA subfamily. As to quaternary structure, monomer. The complex is composed of two ATP-binding proteins (WtpC), two transmembrane proteins (WtpB) and a solute-binding protein (WtpA).

It localises to the cell membrane. Its function is as follows. Part of the ABC transporter complex WtpABC involved in molybdate/tungstate import. Binds tungstate and molybdate, with a preference for tungstate. In Pyrococcus furiosus (strain ATCC 43587 / DSM 3638 / JCM 8422 / Vc1), this protein is Molybdate/tungstate-binding protein WtpA.